Consider the following 226-residue polypeptide: Probable functional amyloid protease FapD (226 aa).

An N-terminal signal peptide occupies residues 1–18 (MRTLILSLLLLVDLTTQA). Positions 50–180 (QKTDFSCGAA…KGWNGIVFAV (131 aa)) constitute a Peptidase C39 domain. The active site involves C56.

This sequence belongs to the FapD family.

It is found in the periplasm. Probable protease that might be involved in processing fibril precursors. Upon overexpression of the endogenous six-gene locus (fapA-fapF), cells form large clumps during liquid growth, make large amounts of biofilm and produce amyloid fibrils. This Pseudomonas aeruginosa (strain ATCC 15692 / DSM 22644 / CIP 104116 / JCM 14847 / LMG 12228 / 1C / PRS 101 / PAO1) protein is Probable functional amyloid protease FapD.